The chain runs to 176 residues: MIDDDGYRPNVGIVICNRQGQVMWARRFGQHSWQFPQGGINPGESAEQAMYRELFEEVGLSRKDVRILASTRNWLRYKLPKRLVRWDTKPVCIGQKQKWFLLQLMSADAEINMQTSSTPEFDGWRWVSYWYPVRQVVSFKRDVYRRVMKEFASVVMALQDNTPKLQSAPAYRRKRG.

The region spanning 6–149 is the Nudix hydrolase domain; the sequence is GYRPNVGIVI…KRDVYRRVMK (144 aa). Residues 38–59 carry the Nudix box motif; that stretch reads GGINPGESAEQAMYRELFEEVG.

This sequence belongs to the Nudix hydrolase family. RppH subfamily. It depends on a divalent metal cation as a cofactor.

Accelerates the degradation of transcripts by removing pyrophosphate from the 5'-end of triphosphorylated RNA, leading to a more labile monophosphorylated state that can stimulate subsequent ribonuclease cleavage. The polypeptide is RNA pyrophosphohydrolase (Salmonella arizonae (strain ATCC BAA-731 / CDC346-86 / RSK2980)).